The chain runs to 121 residues: Large ribosomal subunit protein bL19 (121 aa).

It belongs to the bacterial ribosomal protein bL19 family.

In terms of biological role, this protein is located at the 30S-50S ribosomal subunit interface and may play a role in the structure and function of the aminoacyl-tRNA binding site. In Borreliella burgdorferi (strain ATCC 35210 / DSM 4680 / CIP 102532 / B31) (Borrelia burgdorferi), this protein is Large ribosomal subunit protein bL19 (rplS).